Consider the following 1157-residue polypeptide: Myosin tail region-interacting protein MTI1 (1157 aa).

An SH3 domain is found at 5–69 (EVPFKVVAQF…PKSFVAVQGS (65 aa)). 2 disordered regions span residues 68–116 (GSEV…GPVP) and 135–156 (TAVS…KVPM). Polar residues predominate over residues 77-89 (SSPNTGSTEQRTI). The segment covering 93–110 (VEQKDLPEPISPETKKET) has biased composition (basic and acidic residues). Phosphoserine is present on Ser-103. The span at 138-149 (SAQVQHDSSSGN) shows a compositional bias: polar residues. Phosphoserine occurs at positions 158 and 166. Disordered regions lie at residues 231 to 256 (PEPI…KDLP) and 284 to 888 (KKAK…PKVA). 2 coiled-coil regions span residues 234-301 (INRA…NKNE) and 356-430 (EKEQ…GASR). Basic and acidic residues-rich tracts occupy residues 242-256 (GRIE…KDLP), 284-296 (KKAK…ERSA), and 312-383 (NEKT…RGEN). Acidic residues predominate over residues 398 to 411 (EGDNDEEKEEEDSE). Composition is skewed to basic and acidic residues over residues 412–423 (ENRRAALRERMA) and 506–524 (KTLD…EHGT). The span at 544 to 558 (DSDEDTDDHEFEDAN) shows a compositional bias: acidic residues. Phosphoserine is present on Ser-565. Residues 574 to 585 (GNNESENVNSGE) are compositionally biased toward low complexity. A compositionally biased stretch (basic and acidic residues) spans 597 to 606 (RTAEVSHDIE). Positions 607 to 641 (NSSQNTTGNVLPVSSPQTRVARNGSINSLTKSISG) are enriched in polar residues. 3 positions are modified to phosphoserine: Ser-621, Ser-631, and Ser-634. A Phosphothreonine modification is found at Thr-636. A phosphoserine mark is found at Ser-638 and Ser-647. Residues 642–653 (ENRRKSINEYHD) are compositionally biased toward basic and acidic residues. Over residues 654-668 (TVSTNSSALTETAQD) the composition is skewed to polar residues. Pro residues-rich tracts occupy residues 691–738 (PHPV…PVSS) and 747–765 (SIPP…PAPL). Residues 769 to 778 (KHNEVEEHVK) show a composition bias toward basic and acidic residues. Pro residues predominate over residues 795 to 808 (NTAPPLPRAPPVPP). Polar residues predominate over residues 832–853 (QNVTASTPSMMSTQQRVPTSVL). At Thr-850 the chain carries Phosphothreonine. Residue Ser-889 is modified to Phosphoserine. Phosphothreonine occurs at positions 894 and 895. Lys-1012 participates in a covalent cross-link: Glycyl lysine isopeptide (Lys-Gly) (interchain with G-Cter in ubiquitin).

In terms of assembly, binds to the SH3 domains of the type I myosins MYO3 and MYO5.

It is found in the cytoplasm. The protein resides in the cytoskeleton. It localises to the actin patch. Its function is as follows. Involved in the regulation of actin cytoskeleton. In Saccharomyces cerevisiae (strain ATCC 204508 / S288c) (Baker's yeast), this protein is Myosin tail region-interacting protein MTI1 (BBC1).